The sequence spans 213 residues: Large ribosomal subunit protein uL3 (213 aa).

The protein belongs to the universal ribosomal protein uL3 family. Part of the 50S ribosomal subunit. Forms a cluster with proteins L14 and L19.

One of the primary rRNA binding proteins, it binds directly near the 3'-end of the 23S rRNA, where it nucleates assembly of the 50S subunit. This chain is Large ribosomal subunit protein uL3, found in Bifidobacterium longum subsp. infantis (strain ATCC 15697 / DSM 20088 / JCM 1222 / NCTC 11817 / S12).